A 480-amino-acid chain; its full sequence is G-protein coupled receptor seb-2 (480 aa).

Residues 1–222 (MNPSISTAGA…CMSNGDVEAR (222 aa)) lie on the Extracellular side of the membrane. An N-linked (GlcNAc...) asparagine glycan is attached at Asn-95. Residues 223 to 243 (ILAGLLTYSASVIFLIPAVFL) form a helical membrane-spanning segment. Residues 244 to 261 (LTLLRPIRCQPMFILHRH) lie on the Cytoplasmic side of the membrane. The chain crosses the membrane as a helical span at residues 262–282 (LLISCLLYGAFYLITVSLFVV). The Extracellular segment spans residues 283-305 (NDAPLSSQVFQNHLFCRLLFSIQ). Residues 306–328 (LRYLRLTNFTWMLAEAVYLWRLL) form a helical membrane-spanning segment. At 329-343 (HTAQHSEGETLRSYK) the chain is on the cytoplasmic side. A helical transmembrane segment spans residues 344–364 (VICWGVPGVITVVYIFVRSLN). At 365–386 (DDVGMCWIENSTVAWIEWMIIT) the chain is on the extracellular side. A helical transmembrane segment spans residues 387–407 (PSLLAMGVNLLLLGLIVYILV). The Cytoplasmic segment spans residues 408–423 (KKLRCDPHLERIQYRK). The chain crosses the membrane as a helical span at residues 424 to 444 (AVRGALMLIPVFGVQQLLTIY). Over 445-480 (RFRNVCLIYRLLHKSFCRRMCSEILVITSGEAGSRS) the chain is Extracellular.

This sequence belongs to the G-protein coupled receptor 2 family. Present in the head body-wall muscles from the L1 larval stage through to adulthood. Also expressed between L4 and the adult molt in vulval vm1 muscle cells. These cells play a role in opening the vulva during egg laying.

It localises to the cell membrane. Functionally, not known. Putative receptor. This chain is G-protein coupled receptor seb-2, found in Caenorhabditis elegans.